A 344-amino-acid polypeptide reads, in one-letter code: Probable Delta(7)-sterol 5(6)-desaturase (344 aa).

Transmembrane regions (helical) follow at residues 76–96 (LSLF…FASL), 123–143 (QTNA…VAEV), and 160–180 (WYDF…IYWI). The 126-residue stretch at 167 to 292 (PLFIMFTDFG…FTTLWDRLGG (126 aa)) folds into the Fatty acid hydroxylase domain. Residues 181-185 (HRGLH) carry the Histidine box-1 motif. A Histidine box-2 motif is present at residues 194-198 (HKPHH). A helical membrane pass occupies residues 224-244 (HIFPFIFPLQKMAYVGLFVFI). The short motif at 269–273 (HSVHH) is the Histidine box-3 element.

This sequence belongs to the sterol desaturase family. Fe cation is required as a cofactor.

It is found in the endoplasmic reticulum membrane. It carries out the reaction a Delta(7)-sterol + 2 Fe(II)-[cytochrome b5] + O2 + 2 H(+) = a Delta(5),Delta(7)-sterol + 2 Fe(III)-[cytochrome b5] + 2 H2O. The protein operates within steroid metabolism; ergosterol biosynthesis; ergosterol from zymosterol: step 3/5. Functionally, catalyzes the introduction of a C-5 double bond in the B ring of ergosterol. May contribute to the regulation of ergosterol biosynthesis. This is Probable Delta(7)-sterol 5(6)-desaturase from Neurospora crassa (strain ATCC 24698 / 74-OR23-1A / CBS 708.71 / DSM 1257 / FGSC 987).